The chain runs to 173 residues: Peptide deformylase (173 aa).

Positions 91 and 133 each coordinate Fe cation. The active site involves Glu-134. His-137 contributes to the Fe cation binding site.

Belongs to the polypeptide deformylase family. The cofactor is Fe(2+).

The catalysed reaction is N-terminal N-formyl-L-methionyl-[peptide] + H2O = N-terminal L-methionyl-[peptide] + formate. Functionally, removes the formyl group from the N-terminal Met of newly synthesized proteins. Requires at least a dipeptide for an efficient rate of reaction. N-terminal L-methionine is a prerequisite for activity but the enzyme has broad specificity at other positions. The polypeptide is Peptide deformylase (Buchnera aphidicola subsp. Acyrthosiphon pisum (strain 5A)).